A 682-amino-acid polypeptide reads, in one-letter code: Transcription activator of gluconeogenesis PODANS_4_8760 (682 aa).

A disordered region spans residues 1 to 72 (MPEDGGPFGS…KDPLRPRRKK (72 aa)). Low complexity predominate over residues 9-21 (GSEAAEASGAMSE). Basic and acidic residues-rich tracts occupy residues 29-41 (HEPH…DRMS) and 54-67 (GEVK…DPLR). Residues 77 to 105 (CYACQRAHLTCGDERPCQRCIKRGLQDSC) constitute a DNA-binding region (zn(2)-C6 fungal-type). 5 disordered regions span residues 122 to 148 (EALR…RHHS), 181 to 211 (LTES…SGMV), 325 to 375 (PAGP…RPSK), 509 to 541 (NRNT…AASG), and 586 to 622 (TDKP…HSIL). Polar residues-rich tracts occupy residues 185–206 (LPFN…SNPP), 329–345 (TSLQ…QPTT), and 354–373 (PTMS…NSRP).

The protein belongs to the ERT1/acuK family.

It is found in the nucleus. Its function is as follows. Transcription factor which regulates nonfermentable carbon utilization. Activator of gluconeogenetic genes. This chain is Transcription activator of gluconeogenesis PODANS_4_8760, found in Podospora anserina (strain S / ATCC MYA-4624 / DSM 980 / FGSC 10383) (Pleurage anserina).